A 135-amino-acid polypeptide reads, in one-letter code: Interleukin-4 (135 aa).

The signal sequence occupies residues 1-24 (MGLTSQLIPVLVCLLACTSHFVHG). 3 disulfide bridges follow: cysteine 27/cysteine 135, cysteine 48/cysteine 85, and cysteine 70/cysteine 105. 2 N-linked (GlcNAc...) asparagine glycosylation sites follow: asparagine 62 and asparagine 96.

This sequence belongs to the IL-4/IL-13 family.

It localises to the secreted. Functionally, participates in at least several B-cell activation processes as well as of other cell types. It is a costimulator of DNA-synthesis. It induces the expression of class II MHC molecules on resting B-cells. It enhances both secretion and cell surface expression of IgE and IgG1. It also regulates the expression of the low affinity Fc receptor for IgE (CD23) on both lymphocytes and monocytes. Positively regulates IL31RA expression in macrophages. Stimulates autophagy in dendritic cells by interfering with mTORC1 signaling and through the induction of RUFY4. This is Interleukin-4 (IL4) from Cervus elaphus (Red deer).